A 172-amino-acid polypeptide reads, in one-letter code: R-phycocyanin-2 beta chain (172 aa).

N72 carries the post-translational modification N4-methylasparagine. C82 serves as a coordination point for (2R,3E)-phycocyanobilin. C153 provides a ligand contact to (2R,3E)-phycoerythrobilin.

Belongs to the phycobiliprotein family. As to quaternary structure, heterodimer of an alpha and a beta chain. Post-translationally, contains two covalently linked bilin chromophores.

It localises to the cellular thylakoid membrane. In terms of biological role, light-harvesting photosynthetic bile pigment-protein from the phycobiliprotein complex. The chain is R-phycocyanin-2 beta chain (rpcB) from Synechococcus sp. (strain WH8020).